A 261-amino-acid chain; its full sequence is MADGYWNRQQSLLPHSGLHKRPRPDYEMPASGLPSGNEMHYLSREEDRSGHPMVKDSKTIGSAYDRYLQGQVPSFTSGEASTVGALGLQRGIGGLPNHSLSDPSAMIGRHGGGGPDLAPNGRGMNYGFQPPMDPVSRHGPEPALLPPDASPTLYIEGLPSDCTRREVAHIFRPFVGYREVRLVSKEAKHRGDPLILCFVDFANPACAATALSALQGYKVDEINPESSHLRLQFSRYPGPRSGGGPRSSGPPRGGHGSRGRR.

Disordered regions lie at residues 1 to 38 (MADGYWNRQQSLLPHSGLHKRPRPDYEMPASGLPSGNE) and 232 to 261 (QFSRYPGPRSGGGPRSSGPPRGGHGSRGRR). One can recognise an RRM domain in the interval 151 to 236 (PTLYIEGLPS…SHLRLQFSRY (86 aa)). Over residues 240–254 (RSGGGPRSSGPPRGG) the composition is skewed to gly residues.

As to expression, ubiquitous.

It is found in the nucleus speckle. The protein localises to the cytoplasmic granule. Its function is as follows. RNA-binding protein interacting with the enod40 RNA. This is RNA-binding protein 1 from Medicago truncatula (Barrel medic).